The sequence spans 98 residues: NADH-ubiquinone oxidoreductase chain 4L (98 aa).

The next 3 helical transmembrane spans lie at 1–21 (MTPTYMNIMLAFTISLLGMLT), 29–49 (SLLCLEGMMMSLFIMTTLIAL), and 61–81 (IILLVFAACEAAVGLALLVSI).

The protein belongs to the complex I subunit 4L family. Core subunit of respiratory chain NADH dehydrogenase (Complex I) which is composed of 45 different subunits.

Its subcellular location is the mitochondrion inner membrane. It carries out the reaction a ubiquinone + NADH + 5 H(+)(in) = a ubiquinol + NAD(+) + 4 H(+)(out). Its function is as follows. Core subunit of the mitochondrial membrane respiratory chain NADH dehydrogenase (Complex I) which catalyzes electron transfer from NADH through the respiratory chain, using ubiquinone as an electron acceptor. Part of the enzyme membrane arm which is embedded in the lipid bilayer and involved in proton translocation. This Macaca pagensis (Mentawai macaque) protein is NADH-ubiquinone oxidoreductase chain 4L (MT-ND4L).